A 76-amino-acid polypeptide reads, in one-letter code: Acyl carrier protein (76 aa).

Positions 2 to 76 constitute a Carrier domain; the sequence is SSIFDKVKAI…SAVEYIKENQ (75 aa). Residue Ser-36 is modified to O-(pantetheine 4'-phosphoryl)serine.

Belongs to the acyl carrier protein (ACP) family. In terms of processing, 4'-phosphopantetheine is transferred from CoA to a specific serine of apo-ACP by AcpS. This modification is essential for activity because fatty acids are bound in thioester linkage to the sulfhydryl of the prosthetic group.

It localises to the cytoplasm. It functions in the pathway lipid metabolism; fatty acid biosynthesis. Its function is as follows. Carrier of the growing fatty acid chain in fatty acid biosynthesis. This is Acyl carrier protein from Heliobacterium modesticaldum (strain ATCC 51547 / Ice1).